The primary structure comprises 365 residues: Peptide chain release factor 2 (365 aa).

The residue at position 252 (Gln252) is an N5-methylglutamine.

The protein belongs to the prokaryotic/mitochondrial release factor family. Methylated by PrmC. Methylation increases the termination efficiency of RF2.

It localises to the cytoplasm. Peptide chain release factor 2 directs the termination of translation in response to the peptide chain termination codons UGA and UAA. The protein is Peptide chain release factor 2 of Pasteurella multocida (strain Pm70).